Consider the following 451-residue polypeptide: MTKRKLRNNWIIVTTMITFVTIFLFCLIIIFFLKDTLHNSELDDAERSSSDINNLFHSKPVKDISALDLNASLGNFQEIIIYDEHNNKLFETSNDNTVRVEPGYEHRYFDRVIKKRYKGIDYLIIKEPITTQDFKGYSLLIHSLENYDNIVKSLYIIALAFGVIATIITATISYVFSTQITKPLVSLSNKMIEIRRDGFQNKLQLNTNYEEIDNLANTFNEMMSQIEESFNQQRQFVEDASHELRTPLQIIQGHLNLIQRWGKKDPAVLEESLNISIEEMNRIIKLVEELLELTKGDVNDISSEAQTVHINDEIRSRIHSLKQLHPDYQFDTDLTSKNLEIKMKPHQFEQLFLIFIDNAIKYDVKNKKIKVKTRLKNKQKIIEITDHGIGIPEEDQDFIFDRFYRVDKSRSRSQGGNGLGLSIAQKIIQLNGGSIKIKSEINKGTTFKIIF.

Transmembrane regions (helical) follow at residues 11-31 and 156-176; these read IIVTTMITFVTIFLFCLIIIF and IIALAFGVIATIITATISYVF. Residues 178–231 form the HAMP domain; the sequence is TQITKPLVSLSNKMIEIRRDGFQNKLQLNTNYEEIDNLANTFNEMMSQIEESFN. The Histidine kinase domain occupies 239–451; that stretch reads DASHELRTPL…NKGTTFKIIF (213 aa). Histidine 242 bears the Phosphohistidine; by autocatalysis mark.

In terms of processing, autophosphorylated.

Its subcellular location is the cell membrane. The catalysed reaction is ATP + protein L-histidine = ADP + protein N-phospho-L-histidine.. In terms of biological role, member of the two-component regulatory system ArlS/ArlR involved in the regulation of adhesion, autolysis, multidrug resistance and virulence. ArlS probably functions as a sensor protein kinase which is autophosphorylated at a histidine residue and transfers its phosphate group to ArlR. The sequence is that of Signal transduction histidine-protein kinase ArlS (arlS) from Staphylococcus aureus (strain MRSA252).